The chain runs to 351 residues: Beta-hexosaminidase (351 aa).

Substrate contacts are provided by residues Asp62, Arg70, Arg133, and 163 to 164 (KH). His176 functions as the Proton donor/acceptor in the catalytic mechanism. Asp248 functions as the Nucleophile in the catalytic mechanism.

The protein belongs to the glycosyl hydrolase 3 family. NagZ subfamily. In terms of assembly, monomer.

It is found in the cytoplasm. The enzyme catalyses Hydrolysis of terminal non-reducing N-acetyl-D-hexosamine residues in N-acetyl-beta-D-hexosaminides.. Its pathway is cell wall biogenesis; peptidoglycan recycling. In terms of biological role, plays a role in peptidoglycan recycling by cleaving the terminal beta-1,4-linked N-acetylglucosamine (GlcNAc) from peptide-linked peptidoglycan fragments, giving rise to free GlcNAc, anhydro-N-acetylmuramic acid and anhydro-N-acetylmuramic acid-linked peptides. This Haemophilus influenzae (strain ATCC 51907 / DSM 11121 / KW20 / Rd) protein is Beta-hexosaminidase.